The chain runs to 88 residues: Class I hydrophobin F (88 aa).

Positions 1–21 (MLSRLFTVPAILLATLGSAAT) are cleaved as a signal peptide. 4 disulfide bridges follow: Cys30–Cys67, Cys34–Cys58, Cys35–Cys51, and Cys68–Cys84.

This sequence belongs to the fungal hydrophobin family.

The protein localises to the secreted. The protein resides in the cell wall. Its subcellular location is the vacuole. It localises to the cytoplasmic vesicle. Aerial growth, conidiation, and dispersal of filamentous fungi in the environment rely upon a capability of their secreting small amphipathic proteins called hydrophobins (HPBs) with low sequence identity. Class I can self-assemble into an outermost layer of rodlet bundles on aerial cell surfaces, conferring cellular hydrophobicity that supports fungal growth, development and dispersal; whereas Class II form highly ordered films at water-air interfaces through intermolecular interactions but contribute nothing to the rodlet structure. Hyd1F contributes to certain cell wall-related features, such as hydrophobicity but is not involved in cell wall-related events during fungal proliferation in host hemocoel. Does not contribute to conidial hydrophobicity. This chain is Class I hydrophobin F, found in Beauveria bassiana (strain ARSEF 2860) (White muscardine disease fungus).